We begin with the raw amino-acid sequence, 94 residues long: HssA/B-like protein 51 (94 aa).

Residues 1-25 (MTLFSSISSISNPMTNSKSRISSFG) form a disordered region.

It belongs to the hssA/B family.

This Dictyostelium discoideum (Social amoeba) protein is HssA/B-like protein 51 (hssl51).